The primary structure comprises 238 residues: Flagellar L-ring protein (238 aa).

An N-terminal signal peptide occupies residues 1–23 (MIKLFICQKKYYLTAIFLLTIQS). The N-palmitoyl cysteine moiety is linked to residue cysteine 24. Residue cysteine 24 is the site of S-diacylglycerol cysteine attachment.

It belongs to the FlgH family. In terms of assembly, the basal body constitutes a major portion of the flagellar organelle and consists of four rings (L,P,S, and M) mounted on a central rod.

It is found in the cell outer membrane. It localises to the bacterial flagellum basal body. Assembles around the rod to form the L-ring and probably protects the motor/basal body from shearing forces during rotation. This chain is Flagellar L-ring protein, found in Buchnera aphidicola subsp. Acyrthosiphon pisum (strain 5A).